The following is a 506-amino-acid chain: Deoxyguanosinetriphosphate triphosphohydrolase (506 aa).

The region spanning 66–274 (RLTHSLEVQQ…MEAADDISYC (209 aa)) is the HD domain.

The protein belongs to the dGTPase family. Type 1 subfamily. As to quaternary structure, homotetramer. It depends on Mg(2+) as a cofactor.

The enzyme catalyses dGTP + H2O = 2'-deoxyguanosine + triphosphate + H(+). Its function is as follows. dGTPase preferentially hydrolyzes dGTP over the other canonical NTPs. The protein is Deoxyguanosinetriphosphate triphosphohydrolase of Yersinia pseudotuberculosis serotype O:3 (strain YPIII).